Consider the following 592-residue polypeptide: Aspartate--tRNA(Asp/Asn) ligase (592 aa).

L-aspartate is bound at residue Glu-176. The segment at 200–203 (QLYK) is aspartate. Position 222 (Arg-222) interacts with L-aspartate. ATP contacts are provided by residues 222–224 (RDE) and Gln-231. His-452 lines the L-aspartate pocket. Glu-486 is a binding site for ATP. Residue Arg-493 coordinates L-aspartate. Residue 538–541 (GVDR) coordinates ATP.

Belongs to the class-II aminoacyl-tRNA synthetase family. Type 1 subfamily. In terms of assembly, homodimer.

The protein localises to the cytoplasm. The catalysed reaction is tRNA(Asx) + L-aspartate + ATP = L-aspartyl-tRNA(Asx) + AMP + diphosphate. Functionally, aspartyl-tRNA synthetase with relaxed tRNA specificity since it is able to aspartylate not only its cognate tRNA(Asp) but also tRNA(Asn). Reaction proceeds in two steps: L-aspartate is first activated by ATP to form Asp-AMP and then transferred to the acceptor end of tRNA(Asp/Asn). This is Aspartate--tRNA(Asp/Asn) ligase from Rhodopirellula baltica (strain DSM 10527 / NCIMB 13988 / SH1).